The sequence spans 156 residues: Ecotin (156 aa).

The first 19 residues, 1–19 (MKALLIAAGVAALSSTAMA), serve as a signal peptide directing secretion. An intrachain disulfide couples Cys65 to Cys102.

Belongs to the protease inhibitor I11 (ecotin) family. Homodimer.

It is found in the periplasm. Functionally, general inhibitor of family S1 serine proteases. The sequence is that of Ecotin from Pseudomonas aeruginosa (strain ATCC 15692 / DSM 22644 / CIP 104116 / JCM 14847 / LMG 12228 / 1C / PRS 101 / PAO1).